The sequence spans 166 residues: Gem-associated protein 6 (166 aa).

A Sm domain is found at 4 to 73 (WMKKSPLEWE…VQTVETISEG (70 aa)). The region spanning 68–166 (ETISEGDHRV…LIQGHLSASQ (99 aa)) is the AD domain. Residues Ser94 and Ser165 each carry the phosphoserine modification.

As to quaternary structure, part of the core SMN complex that contains SMN1, GEMIN2/SIP1, DDX20/GEMIN3, GEMIN4, GEMIN5, GEMIN6, GEMIN7, GEMIN8 and STRAP/UNRIP. Part of the SMN-Sm complex that contains SMN1, GEMIN2/SIP1, DDX20/GEMIN3, GEMIN4, GEMIN5, GEMIN6, GEMIN7, GEMIN8, STRAP/UNRIP and the Sm proteins SNRPB, SNRPD1, SNRPD2, SNRPD3, SNRPE, SNRPF and SNRPG. Interacts with GEMIN7; the interaction is direct. Interacts with GEMIN8; the interaction is direct. Interacts with SNRPB, SNRPD2, SNRPD3 and SNRPE; the interaction is direct.

It is found in the nucleus. It localises to the nucleoplasm. The protein localises to the gem. Its subcellular location is the cytoplasm. In terms of biological role, the SMN complex catalyzes the assembly of small nuclear ribonucleoproteins (snRNPs), the building blocks of the spliceosome, and thereby plays an important role in the splicing of cellular pre-mRNAs. Most spliceosomal snRNPs contain a common set of Sm proteins SNRPB, SNRPD1, SNRPD2, SNRPD3, SNRPE, SNRPF and SNRPG that assemble in a heptameric protein ring on the Sm site of the small nuclear RNA to form the core snRNP (Sm core). In the cytosol, the Sm proteins SNRPD1, SNRPD2, SNRPE, SNRPF and SNRPG are trapped in an inactive 6S pICln-Sm complex by the chaperone CLNS1A that controls the assembly of the core snRNP. To assemble core snRNPs, the SMN complex accepts the trapped 5Sm proteins from CLNS1A forming an intermediate. Binding of snRNA inside 5Sm triggers eviction of the SMN complex, thereby allowing binding of SNRPD3 and SNRPB to complete assembly of the core snRNP. The sequence is that of Gem-associated protein 6 (Gemin6) from Mus musculus (Mouse).